A 502-amino-acid polypeptide reads, in one-letter code: UPF0371 protein CLM_0396 (502 aa).

The protein belongs to the UPF0371 family.

This Clostridium botulinum (strain Kyoto / Type A2) protein is UPF0371 protein CLM_0396.